The following is a 221-amino-acid chain: MRVVLLGPPGAGKGTQALKIAKEFDIPHISTGDIFRQNLRDNTELGKLAKEYMDKGLLVPDEVTNRIVEDRLEKEDCKKGFLLDGYPRNIPQAEELDKFLEERGHSLTAVINIQVEREALIDRITGRRVCPVCGATYHIKTSPPKVDNVCDKCGSELIQRSDDKLESVVKRLEVYEKETKPLIDYYTKKGILVNIDGNKSIDEVFEDIKKALLGDRRDDIH.

10–15 provides a ligand contact to ATP; that stretch reads GAGKGT. The tract at residues 30-59 is NMP; sequence STGDIFRQNLRDNTELGKLAKEYMDKGLLV. Residues threonine 31, arginine 36, 57 to 59, 85 to 88, and glutamine 92 contribute to the AMP site; these read LLV and GYPR. The tract at residues 126–163 is LID; the sequence is GRRVCPVCGATYHIKTSPPKVDNVCDKCGSELIQRSDD. Arginine 127 provides a ligand contact to ATP. Residues cysteine 130 and cysteine 133 each coordinate Zn(2+). Position 136–137 (136–137) interacts with ATP; that stretch reads TY. Positions 150 and 153 each coordinate Zn(2+). Arginine 160 and arginine 171 together coordinate AMP. Lysine 199 contacts ATP.

It belongs to the adenylate kinase family. In terms of assembly, monomer.

Its subcellular location is the cytoplasm. It catalyses the reaction AMP + ATP = 2 ADP. It functions in the pathway purine metabolism; AMP biosynthesis via salvage pathway; AMP from ADP: step 1/1. Its function is as follows. Catalyzes the reversible transfer of the terminal phosphate group between ATP and AMP. Plays an important role in cellular energy homeostasis and in adenine nucleotide metabolism. This is Adenylate kinase from Caldanaerobacter subterraneus subsp. tengcongensis (strain DSM 15242 / JCM 11007 / NBRC 100824 / MB4) (Thermoanaerobacter tengcongensis).